Consider the following 448-residue polypeptide: Dual specificity mitogen-activated protein kinase kinase 5 (448 aa).

Residues 18–25 (VIRIKIPN) are interaction with MAPK7. The 92-residue stretch at 18 to 109 (VIRIKIPNSG…EPLQIFPRAC (92 aa)) folds into the PB1 domain. Residues 64-68 (DEDGD) form an interaction with MAP3K2/MAP3K3 region. The segment at 116 to 144 (NIHGLKVNTRAGPSQHTSPVVSDSLPSNS) is disordered. The interaction with MAPK7 stretch occupies residues 117–131 (IHGLKVNTRAGPSQH). Polar residues predominate over residues 126-144 (AGPSQHTSPVVSDSLPSNS). In terms of domain architecture, Protein kinase spans 166 to 419 (IRYRDTLGHG…PEELMGHPFI (254 aa)). ATP contacts are provided by residues 172–180 (LGHGNGGTV) and Lys195. Asp283 serves as the catalytic Proton acceptor. Residue Ser311 is modified to Phosphoserine. Thr315 carries the post-translational modification Phosphothreonine.

Belongs to the protein kinase superfamily. STE Ser/Thr protein kinase family. MAP kinase kinase subfamily. As to quaternary structure, interacts with PARD6A, MAP3K3 and MAPK7. Forms a complex with SQSTM1 and PRKCZ or PRKCI. Mg(2+) is required as a cofactor. In terms of processing, activated by phosphorylation on Ser/Thr by MAP kinase kinase kinases. In terms of tissue distribution, expressed in the liver and brain (at protein level). As to expression, expressed in the liver, muscle, testes, lung, kidney, spleen, heart and brain (at protein level).

The protein localises to the cytoplasm. The protein resides in the cytosol. It is found in the membrane. It carries out the reaction L-seryl-[protein] + ATP = O-phospho-L-seryl-[protein] + ADP + H(+). The enzyme catalyses L-threonyl-[protein] + ATP = O-phospho-L-threonyl-[protein] + ADP + H(+). It catalyses the reaction L-tyrosyl-[protein] + ATP = O-phospho-L-tyrosyl-[protein] + ADP + H(+). Its function is as follows. Acts as a scaffold for the formation of a ternary MAP3K2/MAP3K3-MAP3K5-MAPK7 signaling complex. Activation of this pathway appears to play a critical role in protecting cells from stress-induced apoptosis, neuronal survival and cardiac development and angiogenesis. As part of the MAPK/ERK signaling pathway, acts as a negative regulator of apoptosis in cardiomyocytes via promotion of STUB1/CHIP-mediated ubiquitination and degradation of ICER-type isoforms of CREM. The sequence is that of Dual specificity mitogen-activated protein kinase kinase 5 (Map2k5) from Rattus norvegicus (Rat).